The following is a 123-amino-acid chain: MAAAKPGELMGICSSYQAVMPHFVCLADEFPQPVRPAKLSKGKGRLRRPRQSRFKTQPVTFDEIQEVEEEGVSPMEEEKAKKSFLQSLECLRRSTQSLSLQREQLSSCKLRNSLDSSDSDSAL.

Threonine 56 is subject to Phosphothreonine. Phosphoserine occurs at positions 73, 87, 97, 113, and 119.

Highly expressed in the kidney (at protein level).

The protein localises to the cytoplasm. This is an uncharacterized protein from Felis catus (Cat).